Here is a 1598-residue protein sequence, read N- to C-terminus: Transposon Ty2-LR2 Gag-Pol polyprotein (1598 aa).

3 stretches are compositionally biased toward polar residues: residues Met-1 to His-11, Ala-19 to Asn-39, and Lys-49 to Thr-60. 2 disordered regions span residues Met-1–His-88 and Gln-359–Glu-449. The RNA-binding stretch occupies residues Glu-295–His-397. Positions Thr-369–Arg-381 are enriched in low complexity. 2 stretches are compositionally biased toward polar residues: residues Ile-399–Val-408 and Glu-415–Gln-435. Asp-457 functions as the For protease activity; shared with dimeric partner in the catalytic mechanism. The segment at Asn-579–Cys-636 is integrase-type zinc finger-like. The Integrase catalytic domain maps to Glu-656–Pro-831. 2 residues coordinate Mg(2+): Asp-667 and Asp-732. 3 stretches are compositionally biased toward polar residues: residues Ser-915 to Asp-927, Glu-1009 to Glu-1034, and Gln-1065 to Ser-1082. Disordered stretches follow at residues Ser-915–His-934, Met-1004–Glu-1034, Thr-1059–Lys-1135, Leu-1146–Asp-1165, and His-1170–Glu-1205. The span at Leu-1151 to Asp-1165 shows a compositional bias: basic and acidic residues. A Bipartite nuclear localization signal motif is present at residues Lys-1193–Arg-1227. One can recognise a Reverse transcriptase Ty1/copia-type domain in the interval Asn-1353–Gln-1491. Residues Asp-1361, Asp-1442, and Asp-1443 each coordinate Mg(2+).

In terms of assembly, the capsid protein forms a homotrimer, from which the VLPs are assembled. The protease is a homodimer, whose active site consists of two apposed aspartic acid residues. In terms of processing, initially, virus-like particles (VLPs) are composed of the structural unprocessed proteins Gag and Gag-Pol, and also contain the host initiator methionine tRNA (tRNA(i)-Met) which serves as a primer for minus-strand DNA synthesis, and a dimer of genomic Ty RNA. Processing of the polyproteins occurs within the particle and proceeds by an ordered pathway, called maturation. First, the protease (PR) is released by autocatalytic cleavage of the Gag-Pol polyprotein, and this cleavage is a prerequisite for subsequent processing at the remaining sites to release the mature structural and catalytic proteins. Maturation takes place prior to the RT reaction and is required to produce transposition-competent VLPs.

The protein localises to the cytoplasm. The protein resides in the nucleus. The enzyme catalyses DNA(n) + a 2'-deoxyribonucleoside 5'-triphosphate = DNA(n+1) + diphosphate. It carries out the reaction Endonucleolytic cleavage to 5'-phosphomonoester.. Functionally, capsid protein (CA) is the structural component of the virus-like particle (VLP), forming the shell that encapsulates the retrotransposons dimeric RNA genome. The particles are assembled from trimer-clustered units and there are holes in the capsid shells that allow for the diffusion of macromolecules. CA also has nucleocapsid-like chaperone activity, promoting primer tRNA(i)-Met annealing to the multipartite primer-binding site (PBS), dimerization of Ty2 RNA and initiation of reverse transcription. Its function is as follows. The aspartyl protease (PR) mediates the proteolytic cleavages of the Gag and Gag-Pol polyproteins after assembly of the VLP. Reverse transcriptase/ribonuclease H (RT) is a multifunctional enzyme that catalyzes the conversion of the retro-elements RNA genome into dsDNA within the VLP. The enzyme displays a DNA polymerase activity that can copy either DNA or RNA templates, and a ribonuclease H (RNase H) activity that cleaves the RNA strand of RNA-DNA heteroduplexes during plus-strand synthesis and hydrolyzes RNA primers. The conversion leads to a linear dsDNA copy of the retrotransposon that includes long terminal repeats (LTRs) at both ends. In terms of biological role, integrase (IN) targets the VLP to the nucleus, where a subparticle preintegration complex (PIC) containing at least integrase and the newly synthesized dsDNA copy of the retrotransposon must transit the nuclear membrane. Once in the nucleus, integrase performs the integration of the dsDNA into the host genome. The polypeptide is Transposon Ty2-LR2 Gag-Pol polyprotein (TY2B-LR2) (Saccharomyces cerevisiae (strain ATCC 204508 / S288c) (Baker's yeast)).